Reading from the N-terminus, the 433-residue chain is Oxysterol-binding protein-like protein OBPa (433 aa).

Belongs to the OSBP family.

In Candida albicans (strain SC5314 / ATCC MYA-2876) (Yeast), this protein is Oxysterol-binding protein-like protein OBPa (OBPA).